A 429-amino-acid chain; its full sequence is GTPase Obg (429 aa).

An Obg domain is found at 1 to 158 (MFYDTAKIYV…RWLLLELKLL (158 aa)). In terms of domain architecture, OBG-type G spans 159–329 (ADVGLVGYPN…LIYRLWEIIS (171 aa)). Residues 165-172 (GYPNAGKS), 190-194 (FTTLT), 212-215 (DIPG), 282-285 (NKMD), and 310-312 (SAL) each bind GTP. Residues Ser-172 and Thr-192 each contribute to the Mg(2+) site. Residues 344-421 (IKEQPEEGFV…IGKFEFYFVD (78 aa)) enclose the OCT domain.

This sequence belongs to the TRAFAC class OBG-HflX-like GTPase superfamily. OBG GTPase family. As to quaternary structure, monomer. Mg(2+) is required as a cofactor.

The protein localises to the cytoplasm. In terms of biological role, an essential GTPase which binds GTP, GDP and possibly (p)ppGpp with moderate affinity, with high nucleotide exchange rates and a fairly low GTP hydrolysis rate. Plays a role in control of the cell cycle, stress response, ribosome biogenesis and in those bacteria that undergo differentiation, in morphogenesis control. This chain is GTPase Obg, found in Carboxydothermus hydrogenoformans (strain ATCC BAA-161 / DSM 6008 / Z-2901).